Here is a 90-residue protein sequence, read N- to C-terminus: Probable Fe(2+)-trafficking protein (90 aa).

It belongs to the Fe(2+)-trafficking protein family.

Could be a mediator in iron transactions between iron acquisition and iron-requiring processes, such as synthesis and/or repair of Fe-S clusters in biosynthetic enzymes. This is Probable Fe(2+)-trafficking protein from Chromobacterium violaceum (strain ATCC 12472 / DSM 30191 / JCM 1249 / CCUG 213 / NBRC 12614 / NCIMB 9131 / NCTC 9757 / MK).